The primary structure comprises 203 residues: Holliday junction branch migration complex subunit RuvA (203 aa).

The domain I stretch occupies residues 1–63; sequence MIGQLSGKVD…EEHIHLYGFL (63 aa). The interval 64-142 is domain II; it reads TLEEKIFFNL…KISSGSAIIK (79 aa). The segment at 143-149 is flexible linker; the sequence is ESLNIKN. Residues 150–203 are domain III; the sequence is ITPVASNEVIKALVNLGFSRFEAQNAVQGIITQNPEISIDELIKTALKNRNSNF.

It belongs to the RuvA family. Homotetramer. Forms an RuvA(8)-RuvB(12)-Holliday junction (HJ) complex. HJ DNA is sandwiched between 2 RuvA tetramers; dsDNA enters through RuvA and exits via RuvB. An RuvB hexamer assembles on each DNA strand where it exits the tetramer. Each RuvB hexamer is contacted by two RuvA subunits (via domain III) on 2 adjacent RuvB subunits; this complex drives branch migration. In the full resolvosome a probable DNA-RuvA(4)-RuvB(12)-RuvC(2) complex forms which resolves the HJ.

It localises to the cytoplasm. In terms of biological role, the RuvA-RuvB-RuvC complex processes Holliday junction (HJ) DNA during genetic recombination and DNA repair, while the RuvA-RuvB complex plays an important role in the rescue of blocked DNA replication forks via replication fork reversal (RFR). RuvA specifically binds to HJ cruciform DNA, conferring on it an open structure. The RuvB hexamer acts as an ATP-dependent pump, pulling dsDNA into and through the RuvAB complex. HJ branch migration allows RuvC to scan DNA until it finds its consensus sequence, where it cleaves and resolves the cruciform DNA. The polypeptide is Holliday junction branch migration complex subunit RuvA (Rickettsia conorii (strain ATCC VR-613 / Malish 7)).